Here is a 148-residue protein sequence, read N- to C-terminus: Cytochrome c-type biogenesis protein CcmE (148 aa).

At 1–7 the chain is on the cytoplasmic side; the sequence is MKARNKR. Residues 8–28 form a helical; Signal-anchor for type II membrane protein membrane-spanning segment; that stretch reads LMLVGGGIALLVAAAALVLSA. The Periplasmic portion of the chain corresponds to 29–148; that stretch reads FQQNLVFFHT…AHKTATTVQQ (120 aa). Residues H123 and Y127 each contribute to the heme site.

The protein belongs to the CcmE/CycJ family.

The protein resides in the cell inner membrane. Heme chaperone required for the biogenesis of c-type cytochromes. Transiently binds heme delivered by CcmC and transfers the heme to apo-cytochromes in a process facilitated by CcmF and CcmH. The polypeptide is Cytochrome c-type biogenesis protein CcmE (Azoarcus sp. (strain BH72)).